The primary structure comprises 444 residues: Phosphoglucosamine mutase (444 aa).

Ser104 (phosphoserine intermediate) is an active-site residue. Mg(2+)-binding residues include Ser104, Asp243, Asp245, and Asp247. A Phosphoserine modification is found at Ser104.

It belongs to the phosphohexose mutase family. The cofactor is Mg(2+). Post-translationally, activated by phosphorylation.

It carries out the reaction alpha-D-glucosamine 1-phosphate = D-glucosamine 6-phosphate. Catalyzes the conversion of glucosamine-6-phosphate to glucosamine-1-phosphate. This chain is Phosphoglucosamine mutase, found in Neisseria gonorrhoeae (strain ATCC 700825 / FA 1090).